A 338-amino-acid chain; its full sequence is MSLSAFTLFLALIGGTSGQYYDYDFPLSIYGQSSPNCAPECNCPESYPSAMYCDELKLKSVPMVPPGIKYLYLRNNQIDHIDEKAFENVTDLQWLILDHNLLENSKIKGRVFSKLKQLKKLHINHNNLTESVGPLPKSLEDLQLTHNKITKLGSFEGLVNLTFIHLQHNRLKEDAVSAAFKGLKSLEYLDLSFNQIARLPSGLPVSLLTLYLDNNKISNIPDEYFKRFNALQYLRLSHNELADSGIPGNSFNVSSLVELDLSYNKLKNIPTVNENLENYYLEVNQLEKFDIKSFCKILGPLSYSKIKHLRLDGNRISETSLPPDMYECLRVANEVTLN.

The first 18 residues, 1-18, serve as a signal peptide directing secretion; that stretch reads MSLSAFTLFLALIGGTSG. The residue at position 19 (glutamine 19) is a Pyrrolidone carboxylic acid. Tyrosine 20, tyrosine 21, tyrosine 23, and tyrosine 30 each carry sulfotyrosine. In terms of domain architecture, LRRNT spans 28 to 66; sequence SIYGQSSPNCAPECNCPESYPSAMYCDELKLKSVPMVPP. LRR repeat units lie at residues 67–88, 91–114, 117–137, 138–159, 160–181, 185–205, 206–227, 230–253, 255–276, and 277–296; these read GIKY…AFEN, DLQW…VFSK, QLKK…PLPK, SLED…EGLV, NLTF…AAFK, SLEY…GLPV, SLLT…YFKR, ALQY…SFNV, SLVE…NENL, and ENYY…SFCK. N-linked (GlcNAc...) (keratan sulfate) asparagine glycosylation is present at asparagine 88. A glycan (N-linked (GlcNAc...) (keratan sulfate) asparagine) is linked at asparagine 127. Residue asparagine 160 is glycosylated (N-linked (GlcNAc...) (keratan sulfate) asparagine). A glycan (N-linked (GlcNAc...) (keratan sulfate) asparagine) is linked at asparagine 252. A disulfide bridge links cysteine 295 with cysteine 328. Serine 304 is modified (phosphoserine). One copy of the LRR 11 repeat lies at 305–326; that stretch reads KIKHLRLDGNRISETSLPPDMY.

Belongs to the small leucine-rich proteoglycan (SLRP) family. SLRP class II subfamily. As to quaternary structure, binds to laminin. Post-translationally, sulfated on tyrosine residue(s). Contains keratan sulfate. In terms of tissue distribution, cornea and other tissues.

Its subcellular location is the secreted. It localises to the extracellular space. It is found in the extracellular matrix. The protein is Lumican (LUM) of Homo sapiens (Human).